Reading from the N-terminus, the 848-residue chain is Beta-galactosidase 11 (848 aa).

Positions Met-1–Gly-23 are cleaved as a signal peptide. Asn-29 is a glycosylation site (N-linked (GlcNAc...) asparagine). Catalysis depends on Glu-189, which acts as the Proton donor. Residue Glu-260 is the Nucleophile of the active site. N-linked (GlcNAc...) asparagine glycosylation is found at Asn-261, Asn-472, and Asn-783. The SUEL-type lectin domain maps to Gly-750 to Ser-837.

Belongs to the glycosyl hydrolase 35 family.

It localises to the secreted. Its subcellular location is the extracellular space. The protein localises to the apoplast. The catalysed reaction is Hydrolysis of terminal non-reducing beta-D-galactose residues in beta-D-galactosides.. This is Beta-galactosidase 11 from Oryza sativa subsp. japonica (Rice).